Reading from the N-terminus, the 531-residue chain is Putative cysteine ligase BshC (531 aa).

A coiled-coil region spans residues 447-481; it reads KAQEKKQTKGLDNLEKRLLKAEKKMHSEKLKKIIE.

This sequence belongs to the BshC family.

This is Putative cysteine ligase BshC from Flavobacterium psychrophilum (strain ATCC 49511 / DSM 21280 / CIP 103535 / JIP02/86).